We begin with the raw amino-acid sequence, 574 residues long: MALARGSRQLGALVWGACLCVLVHGQQAQPGQGSDPARWRQLIQWENNGQVYSLLNSGSEYVPAGPQRSESSSRVLLAGAPQAQQRRSHGSPRRRQAPSLPLPGRVGSDTVRGQARHPFGFGQVPDNWREVAVGDSTGMARARTSVSQQRHGGSASSVSASAFASTYRQQPSYPQQFPYPQAPFVSQYENYDPASRTYDQGFVYYRPAGGGVGAGAAAVASAGVIYPYQPRARYEEYGGGEELPEYPPQGFYPAPERPYVPPPPPPPDGLDRRYSHSLYSEGTPGFEQAYPDPGPEAAQAHGGDPRLGWYPPYANPPPEAYGPPRALEPPYLPVRSSDTPPPGGERNGAQQGRLSVGSVYRPNQNGRGLPDLVPDPNYVQASTYVQRAHLYSLRCAAEEKCLASTAYAPEATDYDVRVLLRFPQRVKNQGTADFLPNRPRHTWEWHSCHQHYHSMDEFSHYDLLDAATGKKVAEGHKASFCLEDSTCDFGNLKRYACTSHTQGLSPGCYDTYNADIDCQWIDITDVQPGNYILKVHVNPKYIVLESDFTNNVVRCNIHYTGRYVSATNCKIVQS.

A signal peptide spans 1-25 (MALARGSRQLGALVWGACLCVLVHG). Residues 26 to 95 (QQAQPGQGSD…RRSHGSPRRR (70 aa)) constitute a propeptide that is removed on maturation. 2 disordered regions span residues 62–123 (VPAG…GFGQ) and 239–374 (GGEE…DLVP). Residues 86-96 (RRSHGSPRRRQ) show a composition bias toward basic residues. Pro residues-rich tracts occupy residues 255-268 (PERP…PPPD) and 313-332 (YANP…PPYL). Residues 311–369 (PPYANPPPEAYGPPRALEPPYLPVRSSDTPPPGGERNGAQQGRLSVGSVYRPNQNGRGL) are interaction with FBLN5. The interval 370–574 (PDLVPDPNYV…SATNCKIVQS (205 aa)) is lysyl-oxidase like. 5 disulfides stabilise this stretch: Cys-395–Cys-401, Cys-448–Cys-497, Cys-481–Cys-487, Cys-508–Cys-518, and Cys-555–Cys-569. Residues His-449, His-451, and His-453 each contribute to the Cu cation site. Residues 477–512 (KASFCLEDSTCDFGNLKRYACTSHTQGLSPGCYDTY) constitute a cross-link (lysine tyrosylquinone (Lys-Tyr); alternate). Tyr-512 bears the 2',4',5'-topaquinone; alternate mark.

The protein belongs to the lysyl oxidase family. As to quaternary structure, interacts (via propeptide) with EFEMP2. Interacts with FBLN5. Cu cation is required as a cofactor. Lysine tyrosylquinone residue serves as cofactor. Post-translationally, the lysine tyrosylquinone cross-link (LTQ) is generated by condensation of the epsilon-amino group of a lysine with a topaquinone produced by oxidation of tyrosine. Proteolytic processing by a furin-like protease causes removal of N-terminal propeptide resulting in an enzyme largely inactive, but further proteolytic processing by BMP1 results in enzyme activation. As to expression, expressed in ocular tissues including the iris, ciliary body, lens and optic nerve. Not detected in the retina.

It localises to the secreted. The protein resides in the extracellular space. The protein localises to the extracellular matrix. It carries out the reaction L-lysyl-[protein] + O2 + H2O = (S)-2-amino-6-oxohexanoyl-[protein] + H2O2 + NH4(+). In terms of biological role, catalyzes the oxidative deamination of lysine and hydroxylysine residues in collagen and elastin, resulting in the formation of covalent cross-linkages, and the stabilization of collagen and elastin fibers. Essential for the elastic fiber homeostasis and for their maintenance at adult age. This chain is Lysyl oxidase homolog 1 (LOXL1), found in Homo sapiens (Human).